The sequence spans 527 residues: MELKFSAEVELTLSREVDPAEIEPTVEEFVKEANEDLLQRGVPTGKEGAKIESYRVLEDTIEMEITGTRYLRPHEAAMRVRKRLAERLGRKHRVGVRDLKIPRYEVVLRFDREVTRDDVGYVPVADDVVVEDGTVRLTFQDVDEEMLRRHVIDRVIRLVAWAVEERSELVERVTKVEPGTVVDESGPREIRFDGDVTEEARRRGWVKEFPGRGQWIYTPPMAALFEVLRDFLLERVTRKLGFEPALFPKLIPLETMFRMRYLHGLPDGMYYVCPPKRDPELFDDFKRELYVWGELNERTLGSLKEKLRDPGYVLAPAQCEPFYELLRDEVVDPERLPIKLYDCSGWTYRWEGGAAKGLERVNEFQRIEHVWIAEPEEAERIREELLEATKRVAEELELEWKVVVSDDPFYLEGRLLEDRDIELPDVPSYEFEVYLPFKGERSSEEAWISVGSFNVHGEHFVDGFNVKEKSGRTLFTGCAGLGVTRWVVGLLAQHGFEPEEWPEPILERIDEKFGGLPEVPKTLTWPE.

Residue Ala-317 coordinates L-serine. Cys-319 provides a ligand contact to Zn(2+). Arg-349 contributes to the L-serine binding site. Residues 349–351 (RWE) and 360–361 (RV) each bind ATP. 366-368 (RIE) provides a ligand contact to L-serine. The Zn(2+) site is built by Glu-368 and Cys-478. Position 485 (Arg-485) interacts with ATP.

This sequence belongs to the class-II aminoacyl-tRNA synthetase family. Type-2 seryl-tRNA synthetase subfamily. Homodimer. Zn(2+) is required as a cofactor.

The protein resides in the cytoplasm. The catalysed reaction is tRNA(Ser) + L-serine + ATP = L-seryl-tRNA(Ser) + AMP + diphosphate + H(+). It catalyses the reaction tRNA(Sec) + L-serine + ATP = L-seryl-tRNA(Sec) + AMP + diphosphate + H(+). Its pathway is aminoacyl-tRNA biosynthesis; selenocysteinyl-tRNA(Sec) biosynthesis; L-seryl-tRNA(Sec) from L-serine and tRNA(Sec): step 1/1. Its function is as follows. Catalyzes the attachment of serine to tRNA(Ser). Is also able to aminoacylate tRNA(Sec) with serine, to form the misacylated tRNA L-seryl-tRNA(Sec), which will be further converted into selenocysteinyl-tRNA(Sec). This Methanopyrus kandleri (strain AV19 / DSM 6324 / JCM 9639 / NBRC 100938) protein is Type-2 serine--tRNA ligase.